The primary structure comprises 466 residues: F-box/WD repeat-containing protein 15 (466 aa).

Positions 1–45 constitute an F-box domain; that stretch reads MAIHLPCLPMMKILSYLDAYSLLQAAQVNKDWNELASSDVLWRKL. WD repeat units lie at residues 101-143, 146-185, 187-228, 339-379, and 381-419; these read GYAC…ITWK, EQPA…ALAT, NLKS…LIST, LQCH…KTFQ, and CPEM…LRKC.

In terms of assembly, part of an SCF (SKP1-CUL1-F-box protein) E3 ubiquitin-protein ligase complex. Interacts with KAT7 and SKP1. Specifically expressed in oocytes from follicles of the medullary region of the ovary.

Its subcellular location is the cytoplasm. It localises to the cytosol. It is found in the endoplasmic reticulum. The protein localises to the nucleus. It functions in the pathway protein modification; protein ubiquitination. Its function is as follows. Substrate-recognition component of an SCF (SKP1-CUL1-F-box protein)-type E3 ubiquitin ligase complex. Promotes KAT7 ubiquitination and subsequent degradation in collaboration with MAP2K1 kinase, leading to reduced histone H3K14 acetylation and increased cell proliferation. The protein is F-box/WD repeat-containing protein 15 of Mus musculus (Mouse).